Here is a 69-residue protein sequence, read N- to C-terminus: Double-strand break reduction protein (69 aa).

Helps to maintain the integrity of the chromosome by lowering the steady-state level of double strand breaks. This region of DNA acts as an antitoxin to toxin RalR, a DNase, but it seems to be sRNA RalA that has the antitoxin activity and not this putative protein. Therefore the identity of this as a protein-coding gene has been cast into doubt. The sequence is that of Double-strand break reduction protein from Escherichia coli (strain K12).